The sequence spans 145 residues: Large ribosomal subunit protein bL9 (145 aa).

This sequence belongs to the bacterial ribosomal protein bL9 family.

In terms of biological role, binds to the 23S rRNA. The protein is Large ribosomal subunit protein bL9 of Mesomycoplasma hyopneumoniae (strain 7448) (Mycoplasma hyopneumoniae).